The following is a 502-amino-acid chain: Probable cytochrome P450 313b1 (502 aa).

Cys449 serves as a coordination point for heme.

The protein belongs to the cytochrome P450 family. Heme is required as a cofactor.

The protein resides in the endoplasmic reticulum membrane. Its subcellular location is the microsome membrane. May be involved in the metabolism of insect hormones and in the breakdown of synthetic insecticides. The sequence is that of Probable cytochrome P450 313b1 (Cyp313b1) from Drosophila melanogaster (Fruit fly).